Here is a 608-residue protein sequence, read N- to C-terminus: 2',5'-phosphodiesterase 12 (608 aa).

Residues 1-16 (MWRLPGRSALRGVRSV) constitute a mitochondrion transit peptide. The span at 90 to 99 (AAKKSRKNRA) shows a compositional bias: basic residues. A disordered region spans residues 90 to 111 (AAKKSRKNRAHSSGGAACEATG). Ser-216 is subject to Phosphoserine. Mg(2+) contacts are provided by Glu-350, Asp-495, and Asn-497. The Proton donor/acceptor role is filled by Asp-495.

The protein belongs to the CCR4/nocturin family. It depends on Mg(2+) as a cofactor.

It is found in the mitochondrion matrix. It carries out the reaction Exonucleolytic cleavage of poly(A) to 5'-AMP.. Functionally, enzyme that cleaves 2',5'-phosphodiester bond linking adenosines of the 5'-triphosphorylated oligoadenylates, triphosphorylated oligoadenylates referred as 2-5A modulates the 2-5A system. Degrades triphosphorylated 2-5A to produce AMP and ATP. Also cleaves 3',5'-phosphodiester bond of oligoadenylates. Plays a role as a negative regulator of the 2-5A system that is one of the major pathways for antiviral and antitumor functions induced by interferons (IFNs). Suppression of this enzyme increases cellular 2-5A levels and decreases viral replication in cultured small-airway epithelial cells. This is 2',5'-phosphodiesterase 12 (Pde12) from Mus musculus (Mouse).